A 907-amino-acid chain; its full sequence is Probable ubiquitin-conjugating enzyme E2 24 (907 aa).

2 disordered regions span residues 1 to 23 and 485 to 509; these read MEMS…EHEE and SSTV…EASS. The span at 495–509 shows a compositional bias: polar residues; the sequence is QDLSQKISQSDEASS. A UBC core domain is found at 662–822; the sequence is SWVKKVQQEW…AFLITCKSMI (161 aa). Residue cysteine 748 is the Glycyl thioester intermediate of the active site.

This sequence belongs to the ubiquitin-conjugating enzyme family. In terms of assembly, interacts with PHO1. Interacts with NLA. Expressed in the vascular tissues of cotyledons, leaves, roots, sepals, filaments, anthers and junctions between the inflorescence stems and siliques.

Its subcellular location is the golgi apparatus membrane. The protein resides in the endoplasmic reticulum membrane. It carries out the reaction S-ubiquitinyl-[E1 ubiquitin-activating enzyme]-L-cysteine + [E2 ubiquitin-conjugating enzyme]-L-cysteine = [E1 ubiquitin-activating enzyme]-L-cysteine + S-ubiquitinyl-[E2 ubiquitin-conjugating enzyme]-L-cysteine.. It functions in the pathway protein modification; protein ubiquitination. In terms of biological role, E2 ubiquitin-protein ligase that mediates E1-dependent protein ubiquitination. Mediates PHO1 degradation through multivesicular body-mediated vacuolar proteolysis in response to inorganic phosphate (Pi) availability. Negatively regulates the protein abundance of PHF1 and PHT1s under Pi-sufficient conditions by facilitating the degradation of PHT1 proteins at the endomembrane. Functions cooperatively with NLA to regulate the abundance of the inorganic phosphate (Pi) transporters PHT1-1, PHT1-2 and PHT1-3 in different subcellular compartments. Regulates Pi homeostasis by mediating, cooperatively with NLA, polyubiquitination of PHT1-4 and its targeting for degradation. The polypeptide is Probable ubiquitin-conjugating enzyme E2 24 (Arabidopsis thaliana (Mouse-ear cress)).